The sequence spans 347 residues: NADH-quinone oxidoreductase subunit H (347 aa).

8 helical membrane-spanning segments follow: residues 25-45, 95-115, 128-148, 168-188, 200-220, 251-271, 284-304, and 324-344; these read ILFM…VAAM, FMFT…FAII, IGIL…LFGG, ISYE…TGSF, GWYI…GVAV, FFIG…CLFF, FIPP…MFIL, and VCLP…LIFS.

This sequence belongs to the complex I subunit 1 family. As to quaternary structure, NDH-1 is composed of 14 different subunits. Subunits NuoA, H, J, K, L, M, N constitute the membrane sector of the complex.

It localises to the cell inner membrane. The catalysed reaction is a quinone + NADH + 5 H(+)(in) = a quinol + NAD(+) + 4 H(+)(out). Functionally, NDH-1 shuttles electrons from NADH, via FMN and iron-sulfur (Fe-S) centers, to quinones in the respiratory chain. The immediate electron acceptor for the enzyme in this species is believed to be ubiquinone. Couples the redox reaction to proton translocation (for every two electrons transferred, four hydrogen ions are translocated across the cytoplasmic membrane), and thus conserves the redox energy in a proton gradient. This subunit may bind ubiquinone. The protein is NADH-quinone oxidoreductase subunit H of Psychrobacter arcticus (strain DSM 17307 / VKM B-2377 / 273-4).